The primary structure comprises 309 residues: Serine/threonine-protein phosphatase 4 catalytic subunit (309 aa).

Positions 52, 54, 80, and 112 each coordinate Mn(2+). Histidine 113 (proton donor) is an active-site residue. Residues histidine 162 and histidine 236 each coordinate Mn(2+). Leucine 309 is modified (leucine methyl ester).

It belongs to the PPP phosphatase family. PP-4 (PP-X) subfamily. As to quaternary structure, catalytic subunit of the histone H2A phosphatase complex (HTP-C) containing PPH3, PSY2 and PSY4. It depends on Mn(2+) as a cofactor.

The protein localises to the cytoplasm. The protein resides in the nucleus. The enzyme catalyses O-phospho-L-seryl-[protein] + H2O = L-seryl-[protein] + phosphate. It catalyses the reaction O-phospho-L-threonyl-[protein] + H2O = L-threonyl-[protein] + phosphate. Forms the histone H2A phosphatase complex in association with the regulatory subunits PSY2 and PSY4, which dephosphorylates H2AS128ph (gamma-H2A) that has been displaced from sites of DNA lesions in the double-stranded DNA break repair process. Dephosphorylation is necessary for efficient recovery from the DNA damage checkpoint. This chain is Serine/threonine-protein phosphatase 4 catalytic subunit (PPH3), found in Candida glabrata (strain ATCC 2001 / BCRC 20586 / JCM 3761 / NBRC 0622 / NRRL Y-65 / CBS 138) (Yeast).